The sequence spans 179 residues: MLTRQQKELIVEEMSEIFKKTSLILFADFLGFTVADLTELRSKLREKYGDGARFRVVKNTLLNLALKNAEYEGYEEFLKGPTAVLYVTEGDPVEAVKIVYNFYKDKKADLSRLKGGFLEGKKFTAEEVENIAKLPSKEELYAMLVGRVKAPITGLVFVLSGILRNLVYVLNAIKEKKSE.

The protein belongs to the universal ribosomal protein uL10 family. As to quaternary structure, part of the ribosomal stalk of the 50S ribosomal subunit. The N-terminus interacts with L11 and the large rRNA to form the base of the stalk. The C-terminus forms an elongated spine to which L12 dimers bind in a sequential fashion forming a multimeric L10(L12)X complex.

Functionally, forms part of the ribosomal stalk, playing a central role in the interaction of the ribosome with GTP-bound translation factors. This is Large ribosomal subunit protein uL10 from Thermotoga petrophila (strain ATCC BAA-488 / DSM 13995 / JCM 10881 / RKU-1).